The sequence spans 152 residues: Ribosome maturation factor RimP (152 aa).

This sequence belongs to the RimP family.

It is found in the cytoplasm. In terms of biological role, required for maturation of 30S ribosomal subunits. The chain is Ribosome maturation factor RimP from Ruminiclostridium cellulolyticum (strain ATCC 35319 / DSM 5812 / JCM 6584 / H10) (Clostridium cellulolyticum).